Consider the following 232-residue polypeptide: Ribose-5-phosphate isomerase A (232 aa).

Residues 28-31, 83-86, and 96-99 contribute to the substrate site; these read TGST, DGAD, and KGGG. Glu105 serves as the catalytic Proton acceptor. Lys123 contributes to the substrate binding site.

It belongs to the ribose 5-phosphate isomerase family. Homodimer.

It carries out the reaction aldehydo-D-ribose 5-phosphate = D-ribulose 5-phosphate. The protein operates within carbohydrate degradation; pentose phosphate pathway; D-ribose 5-phosphate from D-ribulose 5-phosphate (non-oxidative stage): step 1/1. Its function is as follows. Catalyzes the reversible conversion of ribose-5-phosphate to ribulose 5-phosphate. The sequence is that of Ribose-5-phosphate isomerase A from Rhizobium etli (strain CIAT 652).